The primary structure comprises 976 residues: Mast/stem cell growth factor receptor kita (976 aa).

The first 21 residues, methionine 1–serine 21, serve as a signal peptide directing secretion. The Extracellular segment spans residues arginine 22–proline 515. Ig-like C2-type domains lie at proline 23–lysine 105, isoleucine 100–arginine 199, proline 206–asparagine 301, isoleucine 308–histidine 402, and phenylalanine 399–serine 504. N-linked (GlcNAc...) asparagine glycosylation is found at asparagine 39 and asparagine 47. 4 disulfides stabilise this stretch: cysteine 44/cysteine 89, cysteine 131/cysteine 180, cysteine 146/cysteine 177, and cysteine 228/cysteine 285. N-linked (GlcNAc...) asparagine glycans are attached at residues asparagine 282, asparagine 309, asparagine 315, asparagine 352, asparagine 449, and asparagine 477. A disulfide bridge links cysteine 422 with cysteine 488. A helical transmembrane segment spans residues leucine 516 to tyrosine 536. Residues lysine 537–valine 976 are Cytoplasmic-facing. Position 559 (tyrosine 559) interacts with Mg(2+). A phosphotyrosine; by autocatalysis mark is found at tyrosine 559 and tyrosine 561. Positions leucine 580–leucine 922 constitute a Protein kinase domain. Residues glycine 587 to valine 594, lysine 614, and glutamate 662 to aspartate 668 each bind ATP. Phosphotyrosine; by autocatalysis is present on residues tyrosine 691 and tyrosine 707. The Proton acceptor role is filled by aspartate 777. Arginine 781 is an ATP binding site. The Mg(2+) site is built by asparagine 782 and aspartate 795. A phosphotyrosine; by autocatalysis mark is found at tyrosine 808 and tyrosine 921. Positions proline 929–valine 976 are disordered. The span at serine 947–valine 976 shows a compositional bias: polar residues.

This sequence belongs to the protein kinase superfamily. Tyr protein kinase family. CSF-1/PDGF receptor subfamily. Ubiquitinated. Rapidly ubiquitinated after autophosphorylation induced by kitlg/scf binding, leading to internalization and degradation. Post-translationally, autophosphorylated on tyrosine residues. Phosphorylated tyrosine residues are important for interaction with specific binding partners. In terms of tissue distribution, expressed in cells of the neural crest-melanocyte lineage. In the embryo, also expressed in mesodermal cells that give rise to hematopoietic precursors, notochord, neural crest-derived cells of the branchial arches, pineal gland, retina and mechanoreceptive sensory cells of lateral line neuromasts. Not detected in primordial germ cells or larval gut.

The protein localises to the cell membrane. The enzyme catalyses L-tyrosyl-[protein] + ATP = O-phospho-L-tyrosyl-[protein] + ADP + H(+). Tyrosine-protein kinase that acts as a cell-surface receptor for the cytokine kitlg/scf and plays a role in the regulation of cell survival and proliferation, hematopoiesis, stem cell maintenance, gametogenesis, and in mast cell development, migration and function. Required for the migration of cells in the melanocyte lineage and the survival of embryonic melanocytes. Required for the differentiation of some, but not all, melanocytes. Not essential for hematopoiesis or primordial germ cell development. The protein is Mast/stem cell growth factor receptor kita (kita) of Danio rerio (Zebrafish).